A 127-amino-acid chain; its full sequence is MSIPDDLRYTKDHEWIKLLEDGSAALVGITDFAQSELGDIVFVELKPAGTKLKAHEVFGTVEAVKTVADLFAPVAGEIMEVNGSLDAAEVVNQDPYGEGWLVKIRIDDPASLAELLDAAAYRELIGE.

Residues alanine 24 to arginine 105 enclose the Lipoyl-binding domain. The residue at position 65 (lysine 65) is an N6-lipoyllysine.

The protein belongs to the GcvH family. The glycine cleavage system is composed of four proteins: P, T, L and H. (R)-lipoate serves as cofactor.

Its function is as follows. The glycine cleavage system catalyzes the degradation of glycine. The H protein shuttles the methylamine group of glycine from the P protein to the T protein. This chain is Glycine cleavage system H protein, found in Chlorobium limicola (strain DSM 245 / NBRC 103803 / 6330).